The chain runs to 253 residues: 3-dehydroquinate dehydratase (253 aa).

3-dehydroquinate is bound by residues E46–R48 and R82. H143 serves as the catalytic Proton donor/acceptor. K170 functions as the Schiff-base intermediate with substrate in the catalytic mechanism. 3-dehydroquinate contacts are provided by R213, S232, and Q236.

Belongs to the type-I 3-dehydroquinase family. In terms of assembly, homodimer.

The catalysed reaction is 3-dehydroquinate = 3-dehydroshikimate + H2O. The protein operates within metabolic intermediate biosynthesis; chorismate biosynthesis; chorismate from D-erythrose 4-phosphate and phosphoenolpyruvate: step 3/7. In terms of biological role, involved in the third step of the chorismate pathway, which leads to the biosynthesis of aromatic amino acids. Catalyzes the cis-dehydration of 3-dehydroquinate (DHQ) and introduces the first double bond of the aromatic ring to yield 3-dehydroshikimate. The sequence is that of 3-dehydroquinate dehydratase from Clostridium novyi (strain NT).